The chain runs to 334 residues: Hemin transport system permease protein HmuU (334 aa).

A run of 9 helical transmembrane segments spans residues 9–29 (LMLGFLLILLVILALGSANMG), 60–80 (LLAVVVGCALAVSGTIMQGLF), 96–116 (AALCVGLIIVMPFSLPPLLAL), 117–137 (YSHMVGAFIGSLAISTIIFTL), 149–169 (LLAGIAINALCGAAVGVLTYI), 191–211 (WSTLLVASSLILPTCILGLLQ), 244–264 (AILIGAAVAVSGVIGFIGLVV), 278–298 (WLLPGAALGGACLLLTADTLA), and 306–326 (EMPVGLLTSLLGGPYFLWLIL).

Belongs to the binding-protein-dependent transport system permease family. FecCD subfamily.

The protein resides in the cell inner membrane. In terms of biological role, part of the binding-protein-dependent transport system for hemin; probably responsible for the translocation of the substrate across the membrane. The protein is Hemin transport system permease protein HmuU (hmuU) of Yersinia pestis.